A 230-amino-acid polypeptide reads, in one-letter code: MNPGTITNREDFLQRIAKQLGREVKLTPPKREYTHRPQDEVLKGASEEELLETFRMVATRIHTDLVECESAKLDDTLRLLIERYHGARILAENDERISAWAPTTSETFDWWDSSQPEASRELAIRADIGITIADAAFAESATIVQYAMPGRSRTISLLPQDHIAIIPKSVLVPRMTQTAQQLATLDRDGLHSPNGVNFISGPSNSADIEMNLIVGVHGPVRVSYVLVHDL.

It belongs to the LutC/YkgG family.

Its function is as follows. Is involved in L-lactate degradation and allows cells to grow with lactate as the sole carbon source. The protein is Lactate utilization protein C of Exiguobacterium sp. (strain ATCC BAA-1283 / AT1b).